Reading from the N-terminus, the 393-residue chain is Probable xylan O-acetyltransferase 11 (393 aa).

The Cytoplasmic portion of the chain corresponds to M1 to R9. Residues A10–A26 traverse the membrane as a helical; Signal-anchor for type II membrane protein segment. Residues Q27 to I393 lie on the Lumenal side of the membrane. Intrachain disulfides connect C45/C96, C67/C132, C76/C368, and C283/C364. N102 carries an N-linked (GlcNAc...) asparagine glycan. The GDS motif signature appears at G119–S121. The Nucleophile role is filled by S121. Residue N325 is glycosylated (N-linked (GlcNAc...) asparagine). The Proton donor role is filled by D363. The DXXH motif signature appears at D363–H366. H366 serves as the catalytic Proton acceptor.

It belongs to the PC-esterase family. TBL subfamily. Expressed in roots, leaves and stems.

It is found in the golgi apparatus membrane. Functionally, probable xylan acetyltransferase required for 2-O- and 3-O-monoacetylation of xylosyl residues in xylan. Possesses extremely low activity in vitro. This is Probable xylan O-acetyltransferase 11 from Oryza sativa subsp. japonica (Rice).